A 157-amino-acid polypeptide reads, in one-letter code: 3-hydroxyacyl-[acyl-carrier-protein] dehydratase FabZ (157 aa).

H58 is a catalytic residue.

This sequence belongs to the thioester dehydratase family. FabZ subfamily.

It localises to the cytoplasm. The enzyme catalyses a (3R)-hydroxyacyl-[ACP] = a (2E)-enoyl-[ACP] + H2O. Its function is as follows. Involved in unsaturated fatty acids biosynthesis. Catalyzes the dehydration of short chain beta-hydroxyacyl-ACPs and long chain saturated and unsaturated beta-hydroxyacyl-ACPs. In Brucella melitensis biotype 2 (strain ATCC 23457), this protein is 3-hydroxyacyl-[acyl-carrier-protein] dehydratase FabZ.